Reading from the N-terminus, the 796-residue chain is Cadherin-11 (796 aa).

The signal sequence occupies residues 1-22 (MKENYCLQAALVCLGMLCHSHA). Positions 23 to 53 (FAPERRGHLRPSFHGHHEKGKEGQVLQRSKR) are excised as a propeptide. Cadherin domains follow at residues 54–159 (GWVW…PPEF), 160–268 (LHET…PPKF), 269–383 (PQSV…PPMF), 384–486 (LAPS…DNAP), and 487–612 (KFAA…YILN). The Extracellular segment spans residues 54–617 (GWVWNQFFVI…AYILNAGLST (564 aa)). Asparagine 455 and asparagine 540 each carry an N-linked (GlcNAc...) asparagine glycan. Residues 618 to 640 (GALIAILACIVILLVIVVLFVTL) traverse the membrane as a helical segment. Residues 641–796 (RRQKKEPLIV…GSKDTFDDDS (156 aa)) lie on the Cytoplasmic side of the membrane. Serine 788 carries the post-translational modification Phosphoserine. Threonine 791 carries the post-translational modification Phosphothreonine.

Interacts with PCDH8. Expressed mainly in brain but also found in other tissues. Expressed in neuroblasts. In the embryo from 67 to 72 days of gestation, detected at high levels in facial mesenchyme including the central palatal mesenchyme, dental mesenchyme, the eye and optic muscle, and the tongue (at protein level).

Its subcellular location is the cell membrane. Its function is as follows. Cadherins are calcium-dependent cell adhesion proteins. They preferentially interact with themselves in a homophilic manner in connecting cells; cadherins may thus contribute to the sorting of heterogeneous cell types. Required for proper focal adhesion assembly. Involved in the regulation of cell migration. This is Cadherin-11 (CDH11) from Homo sapiens (Human).